We begin with the raw amino-acid sequence, 883 residues long: Puromycin-sensitive aminopeptidase (883 aa).

Residues Glu-125 and Gly-265–Asn-269 contribute to the substrate site. Residue His-301 participates in Zn(2+) binding. Glu-302 (proton acceptor) is an active-site residue. Zn(2+) contacts are provided by His-305 and Glu-324.

This sequence belongs to the peptidase M1 family. Zn(2+) serves as cofactor.

The enzyme catalyses Release of an N-terminal amino acid, preferentially alanine, from a wide range of peptides, amides and arylamides.. With respect to regulation, strongly inhibited by puromycin and DAMPAQ-22. Aminopeptidase with broad substrate specificity for several peptides. Involved in proteolytic events essential for cell growth and viability. Plays an essential role during prophase I of meiosis. Required for correct meiotic reconbination in both male and female gametophytes. The sequence is that of Puromycin-sensitive aminopeptidase (MPA1) from Arabidopsis thaliana (Mouse-ear cress).